The sequence spans 634 residues: DNA gyrase subunit B (634 aa).

Residues 416–530 enclose the Toprim domain; sequence REIYIVEGDS…NGYIYIAMPP (115 aa). Positions 422, 495, and 497 each coordinate Mg(2+).

This sequence belongs to the type II topoisomerase GyrB family. In terms of assembly, heterotetramer, composed of two GyrA and two GyrB chains. In the heterotetramer, GyrA contains the active site tyrosine that forms a transient covalent intermediate with DNA, while GyrB binds cofactors and catalyzes ATP hydrolysis. Mg(2+) is required as a cofactor. The cofactor is Mn(2+). It depends on Ca(2+) as a cofactor.

It is found in the cytoplasm. It catalyses the reaction ATP-dependent breakage, passage and rejoining of double-stranded DNA.. A type II topoisomerase that negatively supercoils closed circular double-stranded (ds) DNA in an ATP-dependent manner to modulate DNA topology and maintain chromosomes in an underwound state. Negative supercoiling favors strand separation, and DNA replication, transcription, recombination and repair, all of which involve strand separation. Also able to catalyze the interconversion of other topological isomers of dsDNA rings, including catenanes and knotted rings. Type II topoisomerases break and join 2 DNA strands simultaneously in an ATP-dependent manner. The sequence is that of DNA gyrase subunit B from Borreliella burgdorferi (strain ATCC 35210 / DSM 4680 / CIP 102532 / B31) (Borrelia burgdorferi).